A 629-amino-acid chain; its full sequence is tRNA uridine 5-carboxymethylaminomethyl modification enzyme MnmG (629 aa).

FAD contacts are provided by residues 13 to 18, Val-125, and Ser-180; that span reads GGGHAG. 273–287 serves as a coordination point for NAD(+); it reads GPRYCPSIEDKVMRF. Gln-370 contributes to the FAD binding site.

The protein belongs to the MnmG family. In terms of assembly, homodimer. Heterotetramer of two MnmE and two MnmG subunits. It depends on FAD as a cofactor.

The protein resides in the cytoplasm. In terms of biological role, NAD-binding protein involved in the addition of a carboxymethylaminomethyl (cmnm) group at the wobble position (U34) of certain tRNAs, forming tRNA-cmnm(5)s(2)U34. This chain is tRNA uridine 5-carboxymethylaminomethyl modification enzyme MnmG, found in Salmonella arizonae (strain ATCC BAA-731 / CDC346-86 / RSK2980).